Reading from the N-terminus, the 110-residue chain is Small ribosomal subunit protein bS16 (110 aa).

Positions 84-110 (KREARNNPEKAVPRKERKAAAEAAAKK) are disordered.

This sequence belongs to the bacterial ribosomal protein bS16 family.

The chain is Small ribosomal subunit protein bS16 from Rhodopseudomonas palustris (strain BisB18).